A 702-amino-acid polypeptide reads, in one-letter code: Cytolytic toxin-alpha (702 aa).

Residues 2-265 (SSDIIMAGLG…KADLLVRDIS (264 aa)) form a structural MACPF/CDC pore-forming domain region. Asn-93, Asn-100, Asn-201, Asn-287, and Asn-311 each carry an N-linked (GlcNAc...) asparagine glycan. The tract at residues 266–385 (QGLVRKVHSI…DIIEETKHKA (120 aa)) is structural FAT domain. The segment at 386 to 513 (VLSQSQMVKD…PIISAVEKIV (128 aa)) is thioredoxin (THX) domain. The region spanning 505-702 (IISAVEKIVD…RPYHGTVRLL (198 aa)) is the B30.2/SPRY domain. Asn-530 carries N-linked (GlcNAc...) asparagine glycosylation.

Belongs to the SNTX/VTX toxin family. Heterodimer of alpha and beta subunits; non-covalently linked. Also associates into tetramers or even higher aggregates. In terms of processing, intrachain disulfide bonds may be present in the heterodimer. As to expression, expressed by the venom gland.

It is found in the secreted. Functionally, this heterodimer induces potent hemolytic activities (when tested on rabbit erythrocytes, EC(50)=25-56 ng/mL) due to its ability to form pores in the cell membrane. The pore may be composed of 10 alpha/beta heterodimers. The toxin shows cardiovascular effects that include a vasorelaxant action that may involve the L-arginine-nitric oxid synthase pathway. In addition, it displays edema-inducing activities, increases vascular permeability. It also shows myotoxic activities and interferes irreversibly with neuromuscular function. It also induces irreversible platelet aggregation in rabbit or rat (but not in human or mouse) whole blood. In addition, it has been observed to increase spontaneous quantal acetylcholine release from isolated frog cutaneous pectoris motor endings. The protein is Cytolytic toxin-alpha of Scorpaena plumieri (Spotted scorpionfish).